Reading from the N-terminus, the 1104-residue chain is Ankyrin repeat- and BTB/POZ domain-containing protein 3 (1104 aa).

The helical transmembrane segment at 168-188 threads the bilayer; it reads IVLSWGLAAHCTAAALAALSL. The disordered stretch occupies residues 260 to 301; the sequence is SCSGPGSGSGSGPGPSSGPGAAPAADKEREAPGGGAASGGAC. A compositionally biased stretch (gly residues) spans 264 to 276; the sequence is PGSGSGSGPGPSS. ANK repeat units lie at residues 603–632, 649–678, 687–716, 730–759, and 825–854; these read QGMTPLMYACVRGDEAMVQMLLDAGADLNV, RHWTALTFAVLHGHIPVVQLLLDAGAKVEG, YSETPLQLAAAVGNFELVSLLLERGADPLI, GDMNSFSQAAAHGHRNVFRKLLAQPEKEKS, and TWLESLRIAFQQHRRPLIQCLLKEFKTIQE. The BTB domain maps to 923-989; sequence SDVTFLVEGR…LYYGGPESLL (67 aa).

The protein localises to the membrane. The sequence is that of Ankyrin repeat- and BTB/POZ domain-containing protein 3 from Homo sapiens (Human).